Here is a 162-residue protein sequence, read N- to C-terminus: Interleukin-15 (162 aa).

A signal peptide spans 1–29 (MRISKPHLRITSIQCYVCLLLNTHFLTEA). A propeptide spanning residues 30–48 (GIRVFILGCISAGIPKTEA) is cleaved from the precursor. Intrachain disulfides connect cysteine 83–cysteine 133 and cysteine 90–cysteine 136. N-linked (GlcNAc...) asparagine glycans are attached at residues asparagine 119, asparagine 127, and asparagine 143.

The protein belongs to the IL-15/IL-21 family.

Its subcellular location is the secreted. In terms of biological role, cytokine that plays a major role in the development of inflammatory and protective immune responses to microbial invaders and parasites by modulating immune cells of both the innate and adaptive immune systems. Stimulates the proliferation of natural killer cells, T-cells and B-cells and promotes the secretion of several cytokines. In monocytes, induces the production of IL8 and monocyte chemotactic protein 1/CCL2, two chemokines that attract neutrophils and monocytes respectively to sites of infection. Unlike most cytokines, which are secreted in soluble form, IL15 is expressed in association with its high affinity IL15RA on the surface of IL15-producing cells and delivers signals to target cells that express IL2RB and IL2RG receptor subunits. Binding to its receptor triggers the phosphorylation of JAK1 and JAK3 and the recruitment and subsequent phosphorylation of signal transducer and activator of transcription-3/STAT3 and STAT5. In mast cells, induces the rapid tyrosine phosphorylation of STAT6 and thereby controls mast cell survival and release of cytokines such as IL4. The chain is Interleukin-15 (IL15) from Marmota himalayana (Himalayan marmot).